We begin with the raw amino-acid sequence, 92 residues long: DNA-directed RNA polymerase subunit omega (92 aa).

This sequence belongs to the RNA polymerase subunit omega family. As to quaternary structure, the RNAP catalytic core consists of 2 alpha, 1 beta, 1 beta' and 1 omega subunit. When a sigma factor is associated with the core the holoenzyme is formed, which can initiate transcription.

It carries out the reaction RNA(n) + a ribonucleoside 5'-triphosphate = RNA(n+1) + diphosphate. Functionally, promotes RNA polymerase assembly. Latches the N- and C-terminal regions of the beta' subunit thereby facilitating its interaction with the beta and alpha subunits. This is DNA-directed RNA polymerase subunit omega from Corynebacterium diphtheriae (strain ATCC 700971 / NCTC 13129 / Biotype gravis).